A 224-amino-acid polypeptide reads, in one-letter code: MKKNIQIAIDGPAGAGKSTIAKIVAEALDFTYIDTGAMYRAVTYKAMQQNIHLDDEAKLAEMLAASTIDLKPSPQGQLVFLDGHNVSADIRSNEVTSSVSQVAAHAKVRELLVAQQQKLAANGGVVMDGRDIATHVLKNAELKIFMSATVEERARRRFIDNQKRGIDSSLEKLQEEIALRDKKDSEREASPLIQAEDAIFLDTTALSIDDAAQAILKLAEEKML.

11-19 (GPAGAGKST) serves as a coordination point for ATP.

The protein belongs to the cytidylate kinase family. Type 1 subfamily.

It is found in the cytoplasm. It carries out the reaction CMP + ATP = CDP + ADP. The catalysed reaction is dCMP + ATP = dCDP + ADP. This is Cytidylate kinase from Lysinibacillus sphaericus (strain C3-41).